A 191-amino-acid chain; its full sequence is Protein 2 in picA locus (191 aa).

Belongs to the acyltransferase 3 family.

The protein resides in the cell membrane. Its function is as follows. Seems to regulate the surface properties of the bacterium in the presence of plant cells or plant cell extracts. In Rhizobium radiobacter (Agrobacterium tumefaciens), this protein is Protein 2 in picA locus.